A 516-amino-acid polypeptide reads, in one-letter code: Solute carrier family 49 member A3 (516 aa).

The segment covering 1-10 has biased composition (basic and acidic residues); it reads MAGTMDRLED. Residues 1-22 are disordered; it reads MAGTMDRLEDCNSPETSGTAGD. The next 12 membrane-spanning stretches (helical) occupy residues 34–54, 74–94, 104–124, 139–159, 170–190, 199–219, 253–273, 289–309, 321–341, 344–364, 382–402, and 425–445; these read WVFLLVVSLLSCSNAMLWLSF, WLSLIYFVLSIPFGMAAIWVL, ILGAWLNFSGSVLRAVPCLPV, LCALAQTLVVSSPAKLAALWF, ISTMSNPLGLLIANVLSPALV, MLGIYIGPAALACLLATVCLW, VLLAVCFGGGIGVFSSFSALL, LCGALFIVFGILGALLLGLYV, IGLCLTSMTSVAFALVSQLQG, LALAAICSLFGLFGFSVAPVV, GLIFVLGQAEGMLIMLLLTAL, and VSLLLLAGLCTLFTCVLVIFF. Residues 453-516 form a disordered region; it reads EAESGGSSSP…EWAETMPRDV (64 aa). The span at 504–516 shows a compositional bias: basic and acidic residues; the sequence is GHSEWAETMPRDV.

Belongs to the major facilitator superfamily.

The protein resides in the membrane. In Mus musculus (Mouse), this protein is Solute carrier family 49 member A3 (Slc49a3).